The primary structure comprises 30 residues: Conotoxin Bt12.1 (30 aa).

Post-translationally, contains 3 disulfide bonds. As to expression, expressed by the venom duct.

Its subcellular location is the secreted. The chain is Conotoxin Bt12.1 from Conus betulinus (Beech cone).